The sequence spans 177 residues: ATP synthase subunit delta (177 aa).

It belongs to the ATPase delta chain family. F-type ATPases have 2 components, F(1) - the catalytic core - and F(0) - the membrane proton channel. F(1) has five subunits: alpha(3), beta(3), gamma(1), delta(1), epsilon(1). F(0) has three main subunits: a(1), b(2) and c(10-14). The alpha and beta chains form an alternating ring which encloses part of the gamma chain. F(1) is attached to F(0) by a central stalk formed by the gamma and epsilon chains, while a peripheral stalk is formed by the delta and b chains.

The protein resides in the cell inner membrane. Its function is as follows. F(1)F(0) ATP synthase produces ATP from ADP in the presence of a proton or sodium gradient. F-type ATPases consist of two structural domains, F(1) containing the extramembraneous catalytic core and F(0) containing the membrane proton channel, linked together by a central stalk and a peripheral stalk. During catalysis, ATP synthesis in the catalytic domain of F(1) is coupled via a rotary mechanism of the central stalk subunits to proton translocation. Functionally, this protein is part of the stalk that links CF(0) to CF(1). It either transmits conformational changes from CF(0) to CF(1) or is implicated in proton conduction. The sequence is that of ATP synthase subunit delta from Escherichia coli O81 (strain ED1a).